A 446-amino-acid chain; its full sequence is Radical S-adenosyl methionine domain-containing protein 1, mitochondrial (446 aa).

The Radical SAM core domain occupies lysine 15 to glutamine 277. The [4Fe-4S] cluster site is built by cysteine 34, cysteine 38, and cysteine 41. S-adenosyl-L-methionine-binding positions include glycine 94, glycine 95 to threonine 96, glutamate 130, glutamine 159, arginine 171, and aspartate 195.

It belongs to the anaerobic coproporphyrinogen-III oxidase family. HemW subfamily.

The protein resides in the mitochondrion. Its function is as follows. May be a heme chaperone, appears to bind heme. Homologous bacterial proteins do not have oxygen-independent coproporphyrinogen-III oxidase activity. Binds 1 [4Fe-4S] cluster. The cluster is coordinated with 3 cysteines and an exchangeable S-adenosyl-L-methionine. The chain is Radical S-adenosyl methionine domain-containing protein 1, mitochondrial (rsad1) from Dictyostelium discoideum (Social amoeba).